Here is a 193-residue protein sequence, read N- to C-terminus: NADH-quinone oxidoreductase subunit B (193 aa).

The [4Fe-4S] cluster site is built by C72, C73, C137, and C167.

The protein belongs to the complex I 20 kDa subunit family. In terms of assembly, NDH-1 is composed of 14 different subunits. Subunits NuoB, C, D, E, F, and G constitute the peripheral sector of the complex. It depends on [4Fe-4S] cluster as a cofactor.

It is found in the cell inner membrane. It carries out the reaction a quinone + NADH + 5 H(+)(in) = a quinol + NAD(+) + 4 H(+)(out). In terms of biological role, NDH-1 shuttles electrons from NADH, via FMN and iron-sulfur (Fe-S) centers, to quinones in the respiratory chain. The immediate electron acceptor for the enzyme in this species is believed to be ubiquinone. Couples the redox reaction to proton translocation (for every two electrons transferred, four hydrogen ions are translocated across the cytoplasmic membrane), and thus conserves the redox energy in a proton gradient. The protein is NADH-quinone oxidoreductase subunit B of Caulobacter vibrioides (strain ATCC 19089 / CIP 103742 / CB 15) (Caulobacter crescentus).